A 257-amino-acid chain; its full sequence is Short-chain dehydrogenase reductase 3b (257 aa).

12 to 36 contributes to the NAD(+) binding site; the sequence is IITGGASGIGAESVRLFTEHGARVV. Residue serine 144 coordinates substrate. Tyrosine 157 serves as the catalytic Proton acceptor.

It belongs to the short-chain dehydrogenases/reductases (SDR) family.

This Arabidopsis thaliana (Mouse-ear cress) protein is Short-chain dehydrogenase reductase 3b (SDR3b).